The sequence spans 413 residues: MTTTPLSPSTPSNVQVPDIQGRFGRFGGKYVPETLMPALAELETAYQQYRNDPGFQAELQQLLRDYVGRATPLYFAERLTAHYARPDGTGAQIYLKREDLNHTGAHKINNALGQVLLAKRMGKQRIIAETGAGQHGVATATVCARFGLECVIYMGVHDMERQALNVFRMRLMGAEVRPVAAGTGTLKDATSEAIRDWVTNVETTHYILGSVAGPHPYPMMVRDFHAVIGQETRAQALEKWGGLPDILLACVGGGSNAMGLFYEFVNESSIKLIGVEAAGEGVNTEKHAATLTKGRVGVLHGAMSYLLQDEDGQVIEAHSISAGLDYPGVGPEHSYLKDVGRAEYYSVTDEEALAAFQRLSRLEGIIPALETAHAIAYLETLCPQLDGSPRIVINCSGRGDKDVQTVAKFLIPQ.

An N6-(pyridoxal phosphate)lysine modification is found at K107.

This sequence belongs to the TrpB family. Tetramer of two alpha and two beta chains. Pyridoxal 5'-phosphate is required as a cofactor.

The enzyme catalyses (1S,2R)-1-C-(indol-3-yl)glycerol 3-phosphate + L-serine = D-glyceraldehyde 3-phosphate + L-tryptophan + H2O. It functions in the pathway amino-acid biosynthesis; L-tryptophan biosynthesis; L-tryptophan from chorismate: step 5/5. The beta subunit is responsible for the synthesis of L-tryptophan from indole and L-serine. This chain is Tryptophan synthase beta chain 2 (trpB2), found in Nostoc sp. (strain PCC 7120 / SAG 25.82 / UTEX 2576).